Consider the following 357-residue polypeptide: DNA replication and repair protein RecF (357 aa).

Residue 31–38 (GQNGAGKT) coordinates ATP.

The protein belongs to the RecF family.

It localises to the cytoplasm. The RecF protein is involved in DNA metabolism; it is required for DNA replication and normal SOS inducibility. RecF binds preferentially to single-stranded, linear DNA. It also seems to bind ATP. The protein is DNA replication and repair protein RecF of Coxiella burnetii (strain CbuG_Q212) (Coxiella burnetii (strain Q212)).